A 234-amino-acid polypeptide reads, in one-letter code: Small ribosomal subunit protein uS3 (234 aa).

Positions 39-108 (IRKFVKKKLF…TVIVNVVEVK (70 aa)) constitute a KH type-2 domain. The tract at residues 212-234 (KGKNEETNNETADNSRGRRREAK) is disordered.

This sequence belongs to the universal ribosomal protein uS3 family. In terms of assembly, part of the 30S ribosomal subunit. Forms a tight complex with proteins S10 and S14.

Its function is as follows. Binds the lower part of the 30S subunit head. Binds mRNA in the 70S ribosome, positioning it for translation. This Alkaliphilus metalliredigens (strain QYMF) protein is Small ribosomal subunit protein uS3.